We begin with the raw amino-acid sequence, 212 residues long: MKKSNLDLLILLAKAGGIEKEILTTSRELSKMLNVSPQTIVRWLEDLEKDGLIKKSESRKGTLVTITEEGVKFLEKLHEELSDALYRGIIIGEVVSGIGEGAYYVRQYAPLIREYLGFDPYPGTLNVRVIFPKTIFDALCNVRPIIIPGFTKEGRTFGDVRAYRVKIDNIEGAIVIPSRTIHPPKIAEIIAPVNLRKTLNLKDGDRIRIKTL.

The segment at 1–87 (MKKSNLDLLI…HEELSDALYR (87 aa)) is H-T-H motif-like. The tract at residues 88–212 (GIIIGEVVSG…DGDRIRIKTL (125 aa)) is riboflavin kinase. Residue 97–102 (GIGEGA) coordinates CDP. Residues T124 and N126 each coordinate Mg(2+). T180 and E188 together coordinate FMN. 193–196 (VNLR) is a binding site for CDP.

This sequence belongs to the archaeal riboflavin kinase family. Mg(2+) is required as a cofactor.

The enzyme catalyses riboflavin + CTP = CDP + FMN + H(+). It participates in cofactor biosynthesis; FMN biosynthesis; FMN from riboflavin (CTP route): step 1/1. Catalyzes the CTP-dependent phosphorylation of riboflavin (vitamin B2) to form flavin mononucleotide (FMN). The protein is Riboflavin kinase (ribK) of Pyrococcus furiosus (strain ATCC 43587 / DSM 3638 / JCM 8422 / Vc1).